The primary structure comprises 373 residues: Malate dehydrogenase, mitochondrial (373 aa).

NAD(+)-binding positions include 69-75 (GAAGGIG) and Asp95. Residues Arg141 and Arg147 each coordinate substrate. NAD(+) contacts are provided by residues Asn154 and 177–179 (ISN). Substrate is bound by residues Asn179 and Arg213. His237 serves as the catalytic Proton acceptor. Met288 lines the NAD(+) pocket.

It belongs to the LDH/MDH superfamily. MDH type 1 family. As to quaternary structure, homodimer.

The protein resides in the mitochondrion matrix. It catalyses the reaction (S)-malate + NAD(+) = oxaloacetate + NADH + H(+). The protein is Malate dehydrogenase, mitochondrial of Chlamydomonas reinhardtii (Chlamydomonas smithii).